Consider the following 364-residue polypeptide: Pre-small/secreted glycoprotein (364 aa).

Residues 1–32 (MGVTGILQLPRDRFKRTSFFLWVIILFQRTFS) form the signal peptide. N-linked (GlcNAc...) asparagine; by host glycosylation occurs at N40. Cystine bridges form between C108–C135 and C121–C147. Residues N204, N228, N238, N257, and N268 are each glycosylated (N-linked (GlcNAc...) asparagine; by host).

The protein belongs to the filoviruses glycoprotein family. Homodimer; disulfide-linked. The homodimers are linked by two disulfide bonds in a parallel orientation. In terms of assembly, monomer. In terms of processing, this precursor is processed into mature sGP and delta-peptide by host furin or furin-like proteases. The cleavage site corresponds to the furin optimal cleavage sequence [KR]-X-[KR]-R. Post-translationally, N-glycosylated. O-glycosylated.

It localises to the secreted. In terms of biological role, seems to possess an anti-inflammatory activity as it can reverse the barrier-decreasing effects of TNF alpha. Might therefore contribute to the lack of inflammatory reaction seen during infection in spite the of extensive necrosis and massive virus production. Does not seem to be involved in activation of primary macrophages. Does not seem to interact specifically with neutrophils. Viroporin that permeabilizes mammalian cell plasma membranes. It acts by altering permeation of ionic compounds and small molecules. This activity may lead to viral enterotoxic activity. The sequence is that of Pre-small/secreted glycoprotein (GP) from Zaire ebolavirus (strain Eckron-76) (ZEBOV).